The primary structure comprises 329 residues: Malate dehydrogenase (329 aa).

12 to 18 is an NAD(+) binding site; it reads GAAGQIG. The substrate site is built by R93 and R99. NAD(+)-binding positions include N106, Q113, and 130–132; that span reads TGN. Substrate is bound by residues N132 and R163. Catalysis depends on H188, which acts as the Proton acceptor.

Belongs to the LDH/MDH superfamily. MDH type 2 family.

It catalyses the reaction (S)-malate + NAD(+) = oxaloacetate + NADH + H(+). In terms of biological role, catalyzes the reversible oxidation of malate to oxaloacetate. The polypeptide is Malate dehydrogenase (Mycobacterium ulcerans (strain Agy99)).